Reading from the N-terminus, the 128-residue chain is Diacylglycerol kinase (128 aa).

A divalent metal cation is bound at residue glutamate 34. 2 consecutive transmembrane segments (helical) span residues 35–55 and 58–78; these read SAFR…SYLT and FLEW…ELIN. The Proton acceptor role is filled by glutamate 75. An a divalent metal cation-binding site is contributed by glutamate 82. Residues 108 to 128 traverse the membrane as a helical segment; that stretch reads LIGLIFWAFIWGRYLLTLYFN.

The protein belongs to the bacterial diacylglycerol kinase family. Requires Mg(2+) as cofactor.

The protein localises to the cell inner membrane. The catalysed reaction is a 1,2-diacyl-sn-glycerol + ATP = a 1,2-diacyl-sn-glycero-3-phosphate + ADP + H(+). Catalyzes the ATP-dependent phosphorylation of sn-l,2-diacylglycerol (DAG) to phosphatidic acid. Involved in the recycling of diacylglycerol produced as a by-product during membrane-derived oligosaccharide (MDO) biosynthesis. In Helicobacter pylori (strain J99 / ATCC 700824) (Campylobacter pylori J99), this protein is Diacylglycerol kinase (dgkA).